Here is a 105-residue protein sequence, read N- to C-terminus: Iron-sulfur cluster assembly protein CyaY (105 aa).

It belongs to the frataxin family.

Involved in iron-sulfur (Fe-S) cluster assembly. May act as a regulator of Fe-S biogenesis. This chain is Iron-sulfur cluster assembly protein CyaY, found in Psychromonas ingrahamii (strain DSM 17664 / CCUG 51855 / 37).